We begin with the raw amino-acid sequence, 511 residues long: Limonoid UDP-glucosyltransferase (511 aa).

The active-site Proton acceptor is His19. Position 19 (His19) interacts with an anthocyanidin. Positions 344, 359, 362, 363, 364, and 367 each coordinate UDP-alpha-D-glucose. Gly382 lines the an anthocyanidin pocket. 2 residues coordinate UDP-alpha-D-glucose: Asp383 and Gln384.

Belongs to the UDP-glycosyltransferase family.

The catalysed reaction is limonin + UDP-alpha-D-glucose + H2O = limonin 17-beta-D-glucoside + UDP + 2 H(+). Involved in the glucosylation of limonoids. The protein is Limonoid UDP-glucosyltransferase of Citrus unshiu (Satsuma mandarin).